Reading from the N-terminus, the 671-residue chain is Spartin (671 aa).

Methionine 1 is subject to N-acetylmethionine. The region spanning 16 to 94 (IKEAYEKAFM…LQNVRTRLEI (79 aa)) is the MIT domain. A disordered region spans residues 110–175 (VPKLYPEFPP…CPAEAPPAYS (66 aa)). The segment covering 118-128 (PPKDACKKSPE) has biased composition (basic and acidic residues). Serine 126 is modified (phosphoserine). Low complexity predominate over residues 143-158 (GSASAACAGPSGAPSA). Residues 159-174 (LPVPSPSCPAEAPPAY) are compositionally biased toward pro residues. The segment at 190-385 (DSGEFSSVGE…SIDQGSKDAR (196 aa)) is ubiquitin-binding region (UBR) domain. An LC3-interacting region (LIR); mediates interaction with MAP1LC3A AND MAP1LC3C motif is present at residues 193 to 200 (EFSSVGED). The tract at residues 346 to 421 (FQIPGRSSHP…SSEEKSKELP (76 aa)) is disordered. Lysine 360 participates in a covalent cross-link: Glycyl lysine isopeptide (Lys-Gly) (interchain with G-Cter in ubiquitin). A compositionally biased stretch (low complexity) spans 369 to 379 (QSSSSGSSIDQ). A compositionally biased stretch (basic residues) spans 384-393 (ARHKGKRGKK). Positions 431-615 (ILSGASWVSW…YNIDNIGIKA (185 aa)) constitute a Senescence domain. Residues 435–507 (ASWVSWGLVK…LVDGVCTVAN (73 aa)) form a required for localization to lipid droplets region. A Phosphoserine modification is found at serine 474. The tract at residues 635-671 (VERPQRESQGGATSTEGRRDIGKQVEEEKPGAGKKDK) is disordered. Residues 650 to 671 (EGRRDIGKQVEEEKPGAGKKDK) are compositionally biased toward basic and acidic residues.

In terms of assembly, interacts with ITCH and WWP1. Interacts (via MIT domain) with IST1; leading to the recruitment of SPART to midbodies. Interacts with MAP1LC3A and MAP1LC3C. Post-translationally, ubiquitinated; ubiquitination does not require ITCH and WWP1. In terms of tissue distribution, brain (at protein level).

It is found in the cytoplasm. The protein resides in the midbody. Its subcellular location is the lipid droplet. In terms of biological role, lipophagy receptor that plays an important role in lipid droplet (LD) turnover in motor neurons. Localizes to LDs and interacts with components of the autophagy machinery, such as MAP1LC3A/C proteins to deliver LDs to autophagosomes for degradation via lipophagy. Lipid transfer protein required for lipid droplet degradation, including by lipophagy. Can bind and transfer all lipid species found in lipid droplets, from phospholipids to triglycerides and sterol esters but the direction of lipid transfer by spartin and its cargos are unknown. May be implicated in endosomal trafficking, or microtubule dynamics, or both. Participates in cytokinesis. The chain is Spartin from Mus musculus (Mouse).